A 538-amino-acid chain; its full sequence is MLQIGEDVDYLLIPREVRLAGGVWRVISKPATKEAEFRERLTQFLEEEGRTLEDVARIMEKSTPHPPQPPKKPKEPRVRRRVQQMVTPPPRLVVGTYDSSNASDSEFSDFETSRDKSRQGPRRGKKVRKMPVSYLGSKFLGSDLESEDDEELVEAFLRRQEKQPSAPPARRRVNLPVPMFEDNLGPQLSKADRWREYVSQVSWGKLKRRVKGWAPRAGPGVGEARLASTAVESAGVSSAPEGTSPGDRLGNAGDVCVPQASPRRWRPKINWASFRRRRKEQTAPTGQGADIEADQGGEAADSQREEAIADQREGAAGNQRAGAPADQGAEAADNQREEAADNQRAGAPAEEGAEAADNQREEAADNQRAEAPADQRSQGTDNHREEAADNQRAEAPADQGSEVTDNQREEAVHDQRERAPAVQGADNQRAQARAGQRAEAAHNQRAGAPGIQEAEVSAAQGTTGTAPGARARKQVKTVRFQTPGRFSWFCKRRRAFWHTPRLPTLPKRVPRAGEARNLRVLRAEARAEAEQGEQEDQL.

Residues 58-128 form a disordered region; it reads IMEKSTPHPP…QGPRRGKKVR (71 aa). Residues 119-128 are compositionally biased toward basic residues; it reads QGPRRGKKVR. Residues S142, S146, and S261 each carry the phosphoserine modification. The disordered stretch occupies residues 213 to 473; it reads WAPRAGPGVG…GTAPGARARK (261 aa). A compositionally biased stretch (basic and acidic residues) spans 301 to 313; sequence DSQREEAIADQRE. The segment covering 321-332 has biased composition (low complexity); the sequence is AGAPADQGAEAA. The stretch at 349-366 forms a coiled coil; that stretch reads AEEGAEAADNQREEAADN. 3 stretches are compositionally biased toward basic and acidic residues: residues 357-373, 381-392, and 405-419; these read DNQR…EAPA, DNHREEAADNQR, and DNQR…RERA. Composition is skewed to low complexity over residues 428–438 and 458–469; these read QRAQARAGQRA and AAQGTTGTAPGA. The PxLPxI/L motif; mediates interaction with ANKRA2 signature appears at 500–506; that stretch reads PRLPTLP. The stretch at 514–535 forms a coiled coil; sequence EARNLRVLRAEARAEAEQGEQE.

As to quaternary structure, component of the 3M complex, composed of core components CUL7, CCDC8 and OBSL1. Interacts (via PxLPxI/L motif) with ANKRA2 (via ankyrin repeats); may link the 3M complex to histone deacetylases including HDAC4 and HDAC5. As to expression, widely expressed with low levels in spleen, skeletal muscle, small intestine, kidney and liver.

Its subcellular location is the cytoplasm. The protein resides in the cytoskeleton. It localises to the microtubule organizing center. The protein localises to the centrosome. In terms of biological role, core component of the 3M complex, a complex required to regulate microtubule dynamics and genome integrity. It is unclear how the 3M complex regulates microtubules, it could act by controlling the level of a microtubule stabilizer. Required for localization of CUL7 to the centrosome. This Homo sapiens (Human) protein is Coiled-coil domain-containing protein 8 (CCDC8).